We begin with the raw amino-acid sequence, 51 residues long: Defensin (51 aa).

Cystine bridges form between C3/C31, C17/C36, and C21/C38. Residue F51 is modified to Phenylalanine amide.

Its subcellular location is the secreted. Its function is as follows. Antibacterial peptide against Gram-positive and Gram-negative bacteria and fungi. This Bombus pascuorum (Common carder bumblebee) protein is Defensin.